The following is a 282-amino-acid chain: tRNA pseudouridine synthase B (282 aa).

The active-site Nucleophile is Asp-39.

The protein belongs to the pseudouridine synthase TruB family. Type 1 subfamily.

The catalysed reaction is uridine(55) in tRNA = pseudouridine(55) in tRNA. Its function is as follows. Responsible for synthesis of pseudouridine from uracil-55 in the psi GC loop of transfer RNAs. The chain is tRNA pseudouridine synthase B from Borrelia garinii subsp. bavariensis (strain ATCC BAA-2496 / DSM 23469 / PBi) (Borreliella bavariensis).